The following is a 312-amino-acid chain: Iron/alpha-ketoglutarate-dependent dioxygenase penM (312 aa).

Fe cation contacts are provided by His134, Asp136, and His211. The tract at residues 287–312 (LGLKSEQPLPDGMEKGSMQETDIGGQ) is disordered.

This sequence belongs to the PhyH family. In terms of assembly, homodimer. Fe cation is required as a cofactor.

The enzyme catalyses (-)-cyclopeptine + 2-oxoglutarate + O2 = (Z)-dehydrocyclopeptine + succinate + CO2 + H2O. The catalysed reaction is (Z)-dehydrocyclopeptine + 2-oxoglutarate + O2 = (-)-cyclopenine + succinate + CO2. It carries out the reaction (-)-4'-methoxycyclopeptine + 2-oxoglutarate + O2 = (Z)-4'-methoxydehydrocyclopeptine + succinate + CO2 + H2O. It catalyses the reaction (Z)-4'-methoxydehydrocyclopeptine + 2-oxoglutarate + O2 = (-)-4'-methoxycyclopenine + succinate + CO2. The protein operates within secondary metabolite biosynthesis. Its pathway is alkaloid biosynthesis. It participates in mycotoxin biosynthesis. Its function is as follows. Iron/alpha-ketoglutarate-dependent dioxygenase; part of the gene cluster that mediates the biosynthesis of penigequinolones, potent insecticidal alkaloids that contain a highly modified 10-carbon prenyl group. The first stage is catalyzed by the nonribosomal peptide synthetase penN that condenses anthranilic acid and O-methyl-L-tyrosine to produce 4'-methoxycyclopeptin. 4'-methoxycyclopeptin is then converted to 4'-methoxydehydrocyclopeptin by the ketoglutarate-dependent dioxygenase penM through dehydrogenation to form a double bond between C-alpha and C-beta of the O-methyltyrosine side chain. PenM also converts its first product methoxydehydrocyclopeptin to 4'-methoxycyclopenin. The following conversion of 4'methoxycyclopenin into 4'-methoxyviridicatin is catalyzed by the cyclopenase penL. 4'-methoxyviridicatin is the precursor of quinolone natural products, and is further converted to quinolinone B. The prenyltransferase penI then catalyzes the canonical Friedel-Crafts alkylation of quinolinone B with dimethylallyl cation to yield dimethylallyl quinolone, which is subjected to FAD-dependent dehydrogenation by the FAD-linked oxidoreductase penH to yield conjugated aryl diene. The delta(3') double bond then serves as the site of the second alkylation with DMAPP catalyzed by the prenyltransferase penG to yield a carbenium ion intermediate, which can be attacked by H(2)O to yield a styrenyl quinolone containing a C3'-hydroxyprenyl chain, or undergo cyclization to yield yaequinolones J1 and J2. The conversion of the styrenyl quinolone into the tetrahydrofuran-containing yaequinolone C is performed by the FAD-dependent monooxygenase penE and involves epoxidation of the terminal C7'-C8' olefin, followed by epoxide ring opening initiated by the C3' hydroxyl group. The predicted cysteine hydrolase penJ acts as an epoxide hydrolase that enhances the rate of the 5-exo-tet cyclization step, increasing the yield of yaequinolone C. PenF catalyzes the cationic rearrangement of the epoxide formed by penE (before ring opening to produce yaequinolone C) into yaequinolone D. Finally, the short-chain dehydrogenase/reductase (SDR)-like reductase penD, catalyzes both the dehydration of yaequinolone D and the reduction of the resulting oxonium to yield penigequinolone. The polypeptide is Iron/alpha-ketoglutarate-dependent dioxygenase penM (Penicillium thymicola).